The sequence spans 248 residues: 4-hydroxy-tetrahydrodipicolinate reductase (248 aa).

NAD(+) is bound by residues Asp32, 74–76 (GTT), and 99–102 (SANF). Catalysis depends on His134, which acts as the Proton donor/acceptor. Residue His135 participates in (S)-2,3,4,5-tetrahydrodipicolinate binding. The active-site Proton donor is the Lys138. 144–145 (GT) is a binding site for (S)-2,3,4,5-tetrahydrodipicolinate.

This sequence belongs to the DapB family.

The protein resides in the cytoplasm. It catalyses the reaction (S)-2,3,4,5-tetrahydrodipicolinate + NAD(+) + H2O = (2S,4S)-4-hydroxy-2,3,4,5-tetrahydrodipicolinate + NADH + H(+). The catalysed reaction is (S)-2,3,4,5-tetrahydrodipicolinate + NADP(+) + H2O = (2S,4S)-4-hydroxy-2,3,4,5-tetrahydrodipicolinate + NADPH + H(+). Its pathway is amino-acid biosynthesis; L-lysine biosynthesis via DAP pathway; (S)-tetrahydrodipicolinate from L-aspartate: step 4/4. Its function is as follows. Catalyzes the conversion of 4-hydroxy-tetrahydrodipicolinate (HTPA) to tetrahydrodipicolinate. The sequence is that of 4-hydroxy-tetrahydrodipicolinate reductase from Chlorobium luteolum (strain DSM 273 / BCRC 81028 / 2530) (Pelodictyon luteolum).